Reading from the N-terminus, the 680-residue chain is Forkhead box protein P4 (680 aa).

A compositionally biased stretch (polar residues) spans 1–17; that stretch reads MMVESASETIRSAPSGQ. A disordered region spans residues 1 to 56; that stretch reads MMVESASETIRSAPSGQNGVGSLSGQADGSSGGATGTTASGTGREVTTGADSNGEM. 2 positions are modified to phosphoserine: S52 and S86. Glycyl lysine isopeptide (Lys-Gly) (interchain with G-Cter in SUMO2) cross-links involve residues K175 and K246. The tract at residues 262–306 is disordered; sequence FAAPPKVSPPLSHHTLPNGQPTVLTSRRDSSSHEETPGSHPLYGH. The span at 276–286 shows a compositional bias: polar residues; the sequence is TLPNGQPTVLT. Over residues 287 to 298 the composition is skewed to basic and acidic residues; it reads SRRDSSSHEETP. The C2H2-type zinc-finger motif lies at 307-332; the sequence is GECKWPGCETLCEDLGQFIKHLNTEH. The interval 349–370 is leucine-zipper; the sequence is VQQLEIQLAKESERLQAMMAHL. A Glycyl lysine isopeptide (Lys-Gly) (interchain with G-Cter in SUMO2) cross-link involves residue K378. Residues 407-445 are disordered; that stretch reads GLVHPPTSAAAPVTPLRPPGLGSASLHGGGPARRRSSDK. The segment at residues 467–559 is a DNA-binding region (fork-head); that stretch reads RPPFTYASLI…KMTGSPTLVK (93 aa). At S554 the chain carries Phosphoserine. A disordered region spans residues 602–680; sequence PLSHDDVGAP…EEELPGEELS (79 aa). Polar residues predominate over residues 617–635; it reads SNGSSSPPRLSPPQYSHQV. Over residues 668-680 the composition is skewed to acidic residues; sequence RDLEEELPGEELS.

As to quaternary structure, forms homodimers and heterodimers with FOXP1 and FOXP2. Dimerization is required for DNA-binding.

It is found in the nucleus. Transcriptional repressor that represses lung-specific expression. In Homo sapiens (Human), this protein is Forkhead box protein P4 (FOXP4).